We begin with the raw amino-acid sequence, 310 residues long: uncharacterized protein (310 aa).

Topologically, residues methionine 1–alanine 6 are cytoplasmic. Residues lysine 5–glutamine 69 form the PQ-loop 1 domain. A helical transmembrane segment spans residues alanine 7–isoleucine 27. The Extracellular portion of the chain corresponds to tyrosine 28–threonine 36. The chain crosses the membrane as a helical span at residues glycine 37–phenylalanine 57. Over cysteine 58–lysine 61 the chain is Cytoplasmic. A helical transmembrane segment spans residues glycine 62–valine 82. Over glutamine 83 to lysine 96 the chain is Extracellular. The chain crosses the membrane as a helical span at residues isoleucine 97–leucine 117. The Cytoplasmic portion of the chain corresponds to tryptophan 118–aspartate 131. The chain crosses the membrane as a helical span at residues leucine 132–glutamate 152. A PQ-loop 2 domain is found at alanine 138–leucine 194. Topologically, residues leucine 153–asparagine 164 are extracellular. A helical transmembrane segment spans residues phenylalanine 165–glycine 185. Residues asparagine 186–glycine 191 are Cytoplasmic-facing. Residues isoleucine 192 to tryptophan 212 traverse the membrane as a helical segment. At tryptophan 213–valine 310 the chain is on the extracellular side. A Phosphoserine modification is found at serine 229. N-linked (GlcNAc...) asparagine glycans are attached at residues asparagine 251 and asparagine 259.

It is found in the cell membrane. This is an uncharacterized protein from Saccharomyces cerevisiae (strain ATCC 204508 / S288c) (Baker's yeast).